The chain runs to 286 residues: Release factor glutamine methyltransferase (286 aa).

2 residues coordinate S-adenosyl-L-methionine: D148 and N194. 194 to 197 serves as a coordination point for substrate; the sequence is NPPY.

Belongs to the protein N5-glutamine methyltransferase family. PrmC subfamily.

It carries out the reaction L-glutaminyl-[peptide chain release factor] + S-adenosyl-L-methionine = N(5)-methyl-L-glutaminyl-[peptide chain release factor] + S-adenosyl-L-homocysteine + H(+). Functionally, methylates the class 1 translation termination release factors RF1/PrfA and RF2/PrfB on the glutamine residue of the universally conserved GGQ motif. The chain is Release factor glutamine methyltransferase from Leptospira interrogans serogroup Icterohaemorrhagiae serovar Lai (strain 56601).